A 419-amino-acid polypeptide reads, in one-letter code: L-rhamnose isomerase (419 aa).

Residues His-262, Asp-294, and Asp-296 each contribute to the Mn(2+) site.

It belongs to the rhamnose isomerase family. Homotetramer. Mn(2+) serves as cofactor.

Its subcellular location is the cytoplasm. The catalysed reaction is L-rhamnopyranose = L-rhamnulose. Its pathway is carbohydrate degradation; L-rhamnose degradation; glycerone phosphate from L-rhamnose: step 1/3. In terms of biological role, catalyzes the interconversion of L-rhamnose and L-rhamnulose. The protein is L-rhamnose isomerase of Shigella sonnei (strain Ss046).